Consider the following 295-residue polypeptide: tRNA dimethylallyltransferase (295 aa).

11–18 (GPTVSGKS) contributes to the ATP binding site. 13 to 18 (TVSGKS) lines the substrate pocket. 2 interaction with substrate tRNA regions span residues 36-39 (DSMQ) and 158-162 (QRIIR).

It belongs to the IPP transferase family. As to quaternary structure, monomer. Mg(2+) is required as a cofactor.

It carries out the reaction adenosine(37) in tRNA + dimethylallyl diphosphate = N(6)-dimethylallyladenosine(37) in tRNA + diphosphate. In terms of biological role, catalyzes the transfer of a dimethylallyl group onto the adenine at position 37 in tRNAs that read codons beginning with uridine, leading to the formation of N6-(dimethylallyl)adenosine (i(6)A). The sequence is that of tRNA dimethylallyltransferase from Bartonella quintana (strain Toulouse) (Rochalimaea quintana).